A 177-amino-acid polypeptide reads, in one-letter code: MSCVGKLPIIIPEGVKVGLNDLEVKISGPKGELSKSFKGSIGISLAENKLLVKPLSSSKSARAMWGTARSIISNMVTGVKEGFKLKLEINGVGYRAMMKGKYLNLMLAKSHNTKIEIPSHIKVEVPKQNIIILEGTDKEKLGQFASIIIKQRPPEPYKGKGIKFEDQFIPCKEGKKN.

It belongs to the universal ribosomal protein uL6 family. As to quaternary structure, part of the 50S ribosomal subunit.

This protein binds to the 23S rRNA, and is important in its secondary structure. It is located near the subunit interface in the base of the L7/L12 stalk, and near the tRNA binding site of the peptidyltransferase center. This is Large ribosomal subunit protein uL6 from Rickettsia bellii (strain OSU 85-389).